We begin with the raw amino-acid sequence, 264 residues long: 3-methyl-2-oxobutanoate hydroxymethyltransferase (264 aa).

Residues aspartate 42 and aspartate 81 each coordinate Mg(2+). Residues 42–43 (DS), aspartate 81, and lysine 110 each bind 3-methyl-2-oxobutanoate. A Mg(2+)-binding site is contributed by glutamate 112. Catalysis depends on glutamate 179, which acts as the Proton acceptor.

This sequence belongs to the PanB family. As to quaternary structure, homodecamer; pentamer of dimers. The cofactor is Mg(2+).

It localises to the cytoplasm. The enzyme catalyses 3-methyl-2-oxobutanoate + (6R)-5,10-methylene-5,6,7,8-tetrahydrofolate + H2O = 2-dehydropantoate + (6S)-5,6,7,8-tetrahydrofolate. The protein operates within cofactor biosynthesis; (R)-pantothenate biosynthesis; (R)-pantoate from 3-methyl-2-oxobutanoate: step 1/2. Functionally, catalyzes the reversible reaction in which hydroxymethyl group from 5,10-methylenetetrahydrofolate is transferred onto alpha-ketoisovalerate to form ketopantoate. The polypeptide is 3-methyl-2-oxobutanoate hydroxymethyltransferase (Francisella tularensis subsp. tularensis (strain FSC 198)).